A 343-amino-acid polypeptide reads, in one-letter code: Ribosomal RNA small subunit methyltransferase C (343 aa).

Belongs to the methyltransferase superfamily. RsmC family. Monomer.

It localises to the cytoplasm. It catalyses the reaction guanosine(1207) in 16S rRNA + S-adenosyl-L-methionine = N(2)-methylguanosine(1207) in 16S rRNA + S-adenosyl-L-homocysteine + H(+). Functionally, specifically methylates the guanine in position 1207 of 16S rRNA in the 30S particle. The sequence is that of Ribosomal RNA small subunit methyltransferase C from Pseudoalteromonas atlantica (strain T6c / ATCC BAA-1087).